The following is a 667-amino-acid chain: Ribosomal oxygenase 1 (667 aa).

Position 1 is an N-acetylmethionine (Met-1). Low complexity predominate over residues 1–11 (MDGLRASAGLL). A disordered region spans residues 1–99 (MDGLRASAGL…ATGREPHGQL (99 aa)). Composition is skewed to basic residues over residues 12-22 (RRGRLRRRRQQ) and 35-44 (RPRKIRRQLR). Ser-61, Ser-64, and Ser-108 each carry phosphoserine. Positions 322-467 (CSLRLLCPQA…DFLEAVLPLA (146 aa)) constitute a JmjC domain. Positions 368, 370, and 433 each coordinate Fe cation.

The protein belongs to the ROX family. NO66 subfamily. In terms of assembly, interacts with SP7/OSX; the interaction is direct. Interacts with MYC. Interacts with PHF19; leading to its recruitment to H3K36me3 sites. Fe(2+) is required as a cofactor.

It localises to the nucleus. The protein localises to the nucleolus. The protein resides in the nucleoplasm. The enzyme catalyses N(6),N(6)-dimethyl-L-lysyl(36)-[histone H3] + 2 2-oxoglutarate + 2 O2 = L-lysyl(36)-[histone H3] + 2 formaldehyde + 2 succinate + 2 CO2. It catalyses the reaction N(6)-methyl-L-lysyl-[protein] + 2-oxoglutarate + O2 = L-lysyl-[protein] + formaldehyde + succinate + CO2. It carries out the reaction L-histidyl-[protein] + 2-oxoglutarate + O2 = (3S)-3-hydroxy-L-histidyl-[protein] + succinate + CO2. In terms of biological role, oxygenase that can act as both a histone lysine demethylase and a ribosomal histidine hydroxylase. Specifically demethylates 'Lys-4' (H3K4me) and 'Lys-36' (H3K36me) of histone H3, thereby playing a central role in histone code. Preferentially demethylates trimethylated H3 'Lys-4' (H3K4me3) and monomethylated H3 'Lys-4' (H3K4me1) residues, while it has weaker activity for dimethylated H3 'Lys-36' (H3K36me2). Acts as a regulator of osteoblast differentiation via its interaction with SP7/OSX by demethylating H3K4me and H3K36me, thereby inhibiting SP7/OSX-mediated promoter activation. Also catalyzes demethylation of non-histone proteins, such as CGAS: demethylation of monomethylated CGAS promotes interaction between CGAS and PARP1, followed by PARP1 inactivation. Also catalyzes the hydroxylation of 60S ribosomal protein L8 on 'His-216', thereby playing a role in ribosome biogenesis. Participates in MYC-induced transcriptional activation. In Bos taurus (Bovine), this protein is Ribosomal oxygenase 1 (RIOX1).